A 426-amino-acid chain; its full sequence is Meiotically up-regulated gene 170 protein (426 aa).

The protein belongs to the arrestin family.

The protein resides in the cytoplasm. The protein localises to the nucleus. Has a role in meiosis. This Schizosaccharomyces pombe (strain 972 / ATCC 24843) (Fission yeast) protein is Meiotically up-regulated gene 170 protein (mug170).